The sequence spans 317 residues: GTP cyclohydrolase MptA (317 aa).

This sequence belongs to the GTP cyclohydrolase IV family. As to quaternary structure, homodimer. Fe(2+) serves as cofactor.

It catalyses the reaction GTP + H2O = 7,8-dihydroneopterin 2',3'-cyclic phosphate + formate + diphosphate + H(+). Its pathway is cofactor biosynthesis; 5,6,7,8-tetrahydromethanopterin biosynthesis. Converts GTP to 7,8-dihydro-D-neopterin 2',3'-cyclic phosphate, the first intermediate in the biosynthesis of coenzyme methanopterin. This is GTP cyclohydrolase MptA from Methanococcoides burtonii (strain DSM 6242 / NBRC 107633 / OCM 468 / ACE-M).